Here is a 558-residue protein sequence, read N- to C-terminus: Laccase-10 (558 aa).

The first 22 residues, 1–22 (MVFPIRILVLFALLAFPACVHG), serve as a signal peptide directing secretion. Plastocyanin-like domains follow at residues 30-146 (NVVT…PKLG) and 157-308 (EEVI…YSGT). The N-linked (GlcNAc...) asparagine glycan is linked to Asn-76. Cu cation is bound by residues His-80 and His-82. N-linked (GlcNAc...) asparagine glycosylation occurs at Asn-112. His-125 and His-127 together coordinate Cu cation. N-linked (GlcNAc...) asparagine glycans are attached at residues Asn-185, Asn-296, Asn-323, Asn-373, Asn-383, Asn-400, and Asn-441. The region spanning 408–542 (DFPAKPRRVF…KMAFLVENGK (135 aa)) is the Plastocyanin-like 3 domain. Residues His-459, His-462, His-464, His-521, Cys-522, His-523, and His-527 each coordinate Cu cation. N-linked (GlcNAc...) asparagine glycosylation occurs at Asn-545.

The protein belongs to the multicopper oxidase family. Cu cation is required as a cofactor. Ubiquitous, with lower levels in siliques.

Its subcellular location is the secreted. It is found in the extracellular space. The protein resides in the apoplast. It carries out the reaction 4 hydroquinone + O2 = 4 benzosemiquinone + 2 H2O. Its function is as follows. Lignin degradation and detoxification of lignin-derived products. This is Laccase-10 (LAC10) from Arabidopsis thaliana (Mouse-ear cress).